Reading from the N-terminus, the 335-residue chain is Glycerol-3-phosphate dehydrogenase [NAD(P)+] (335 aa).

Residues serine 10, phenylalanine 11, arginine 31, and lysine 105 each coordinate NADPH. 3 residues coordinate sn-glycerol 3-phosphate: lysine 105, glycine 136, and serine 138. Alanine 140 serves as a coordination point for NADPH. Lysine 191, aspartate 244, serine 254, arginine 255, and asparagine 256 together coordinate sn-glycerol 3-phosphate. Lysine 191 serves as the catalytic Proton acceptor. Arginine 255 provides a ligand contact to NADPH. Valine 279 and glutamate 281 together coordinate NADPH.

This sequence belongs to the NAD-dependent glycerol-3-phosphate dehydrogenase family.

Its subcellular location is the cytoplasm. It carries out the reaction sn-glycerol 3-phosphate + NAD(+) = dihydroxyacetone phosphate + NADH + H(+). The catalysed reaction is sn-glycerol 3-phosphate + NADP(+) = dihydroxyacetone phosphate + NADPH + H(+). The protein operates within membrane lipid metabolism; glycerophospholipid metabolism. Catalyzes the reduction of the glycolytic intermediate dihydroxyacetone phosphate (DHAP) to sn-glycerol 3-phosphate (G3P), the key precursor for phospholipid synthesis. The protein is Glycerol-3-phosphate dehydrogenase [NAD(P)+] of Leptospira borgpetersenii serovar Hardjo-bovis (strain L550).